A 368-amino-acid polypeptide reads, in one-letter code: Protein mab-21-like (368 aa).

The protein belongs to the mab-21 family.

In Drosophila melanogaster (Fruit fly), this protein is Protein mab-21-like.